The chain runs to 343 residues: MMLFRAVRHSDLNGVQSLSQRAGIGLTSFPNNLDQLRSRIARSVDTFDGKLARAQQGFLFVLEDTSANRVAGVSAIEVAVGLEEPFYNFRVQKTIRSSRELGIYKSIEALTLEQDQTGNSELCTLFLDPEYQKGRNGTFLSKARFLFIAAFRDIFSKTIFAEMRGVADEQGNSPFWNSLGQHFFGIPFSQADYLTGIGSKTFIAELMPLHPIYISLLSAEAQKVIGQVHEKTVPARAILEKEGLIYQGHIDIFDGGALLQAEIDRIRAVKESRLVSVSKAESVTRDDGVPCIVANQQFSEFRALLLNVVCDSNELFLTAAEMGALQVSDGDQVRLVSLFPKEN.

L125 lines the succinyl-CoA pocket. H229 (proton donor) is an active-site residue.

Belongs to the arginine N-succinyltransferase family.

The enzyme catalyses succinyl-CoA + L-arginine = N(2)-succinyl-L-arginine + CoA + H(+). It functions in the pathway amino-acid degradation; L-arginine degradation via AST pathway; L-glutamate and succinate from L-arginine: step 1/5. Functionally, catalyzes the transfer of succinyl-CoA to arginine to produce N(2)-succinylarginine. The protein is Arginine N-succinyltransferase of Photorhabdus laumondii subsp. laumondii (strain DSM 15139 / CIP 105565 / TT01) (Photorhabdus luminescens subsp. laumondii).